Reading from the N-terminus, the 163-residue chain is Neurotrophin-3 (163 aa).

A signal peptide spans 1–3 (IQS). Residues 4-119 (SSMDQGILTE…VLNRTSRRKR (116 aa)) constitute a propeptide that is removed on maturation. A disordered region spans residues 36 to 61 (QTARTKDGMQTTVKKTEAEADARASQ). Residues 49–61 (KKTEAEADARASQ) are compositionally biased toward basic and acidic residues. N-linked (GlcNAc...) asparagine glycosylation occurs at Asn-112.

It belongs to the NGF-beta family.

The protein resides in the secreted. Seems to promote the survival of visceral and proprioceptive sensory neurons. In Boa constrictor (Boa), this protein is Neurotrophin-3 (NTF3).